The chain runs to 961 residues: Exportin-T (961 aa).

Belongs to the exportin family.

The protein resides in the cytoplasm. Its subcellular location is the nucleus. Mediates the nuclear export of aminoacylated tRNAs. The polypeptide is Exportin-T (xpot) (Danio rerio (Zebrafish)).